The chain runs to 632 residues: tRNA uridine 5-carboxymethylaminomethyl modification enzyme MnmG (632 aa).

An FAD-binding site is contributed by 13-18 (GGGHAG). 273–287 (GPRYCPSIEDKIHRF) contacts NAD(+).

This sequence belongs to the MnmG family. Homodimer. Heterotetramer of two MnmE and two MnmG subunits. FAD is required as a cofactor.

The protein localises to the cytoplasm. NAD-binding protein involved in the addition of a carboxymethylaminomethyl (cmnm) group at the wobble position (U34) of certain tRNAs, forming tRNA-cmnm(5)s(2)U34. In Psychrobacter cryohalolentis (strain ATCC BAA-1226 / DSM 17306 / VKM B-2378 / K5), this protein is tRNA uridine 5-carboxymethylaminomethyl modification enzyme MnmG.